The sequence spans 519 residues: F-box-like/WD repeat-containing protein TBL1XR1-A (519 aa).

Positions 4–36 (SSDEVNFLVYRYLQESGFSHSAFTFGIESHISQ) constitute a LisH domain. Residues 41-86 (GALAPPAALISIIQKGLQYVEAEVSINEDGTLFDGRPIESLSLIDA) form the F-box-like domain. The segment covering 115-139 (AAAAAATPNNQQPPAKNGENTANGE) has biased composition (low complexity). The disordered stretch occupies residues 115–147 (AAAAAATPNNQQPPAKNGENTANGEENGGHALA). WD repeat units lie at residues 172-211 (GHES…TSGS), 228-267 (PSNK…ASTL), 269-308 (QHKG…AKQQ), 311-349 (FHSA…PIKT), 352-391 (GHTN…CVHD), 394-442 (AHNK…CIHT), 445-484 (KHQE…LVHS), and 486-519 (RGTG…DLRK).

Belongs to the WD repeat EBI family. As to quaternary structure, interacts with heterodimers of rxra and thrb, and this interaction is abrogated by thyroid hormone binding to thrb. Interacts with ncor1.

It is found in the nucleus. Its function is as follows. F-box-like protein which acts as an integral component of the N-CoR transcriptional corepressor complex. Probably regulates transcription activation mediated by nuclear receptors. May mediate the recruitment of the 19S proteasome complex, leading to the subsequent proteasomal degradation of the N-CoR complex, thereby allowing cofactor exchange and transcription activation. The chain is F-box-like/WD repeat-containing protein TBL1XR1-A (tbl1xr1-a) from Xenopus laevis (African clawed frog).